The chain runs to 271 residues: Sulfur carrier protein adenylyltransferase (271 aa).

Residues Arg13, Gly40, Glu61, Arg72, Lys85, Leu109, and 129 to 133 contribute to the ATP site; that span reads DNFPT. Cys175 and Cys178 together coordinate Zn(2+). A Glycyl cysteine thioester (Cys-Gly) (interchain with G-Cter in TtuB) cross-link involves residue Cys192. Zn(2+) contacts are provided by Cys249 and Cys252.

The protein belongs to the HesA/MoeB/ThiF family. Requires Zn(2+) as cofactor. In terms of processing, conjugated to TtuB via a covalent linkage that likely involves a lysine residue. Is able to form a covalent thioester adduct with TtuB via Cys-192 in vitro.

The enzyme catalyses [molybdopterin-synthase sulfur-carrier protein]-C-terminal Gly-Gly + ATP + H(+) = [molybdopterin-synthase sulfur-carrier protein]-C-terminal Gly-Gly-AMP + diphosphate. The catalysed reaction is [ThiS sulfur-carrier protein]-C-terminal Gly-Gly + ATP + H(+) = [ThiS sulfur-carrier protein]-C-terminal Gly-Gly-AMP + diphosphate. It carries out the reaction [TtuB sulfur-carrier protein]-C-terminal Gly-Gly + ATP + H(+) = [TtuB sulfur-carrier protein]-C-terminal Gly-Gly-AMP + diphosphate. Its pathway is tRNA modification. The protein operates within cofactor biosynthesis; thiamine diphosphate biosynthesis. It participates in cofactor biosynthesis; molybdopterin biosynthesis. Enzymatic activity may be regulated by TtuB conjugation. In terms of biological role, adenylyltransferase involved in the biosynthesis of several sulfur compounds. Is required for the 2-thiolation of 5-methyluridine residue at position 54 in the T loop of tRNAs, leading to 5-methyl-2-thiouridine (m(5)s(2)U or s(2)T). This modification allows thermal stabilization of tRNAs in thermophilic microorganisms, and is essential for cell growth at high temperatures. TtuC catalyzes the adenylation by ATP of the carboxyl group of the C-terminal glycine of sulfur carrier protein TtuB. Is also involved in the biosynthesis of thiamine, molybdenum cofactor (Moco) and probably tungsten cofactor (Wco), by adenylating the sulfur carriers ThiS and MoaD. Is required for the conjugation of TtuB to target proteins. This chain is Sulfur carrier protein adenylyltransferase, found in Thermus thermophilus (strain ATCC BAA-163 / DSM 7039 / HB27).